Here is a 546-residue protein sequence, read N- to C-terminus: Chaperonin GroEL (546 aa).

ATP is bound by residues 30–33, lysine 51, 87–91, glycine 415, and aspartate 495; these read TLGP and DGTTT.

This sequence belongs to the chaperonin (HSP60) family. As to quaternary structure, forms a cylinder of 14 subunits composed of two heptameric rings stacked back-to-back. Interacts with the co-chaperonin GroES.

The protein localises to the cytoplasm. It carries out the reaction ATP + H2O + a folded polypeptide = ADP + phosphate + an unfolded polypeptide.. Its function is as follows. Together with its co-chaperonin GroES, plays an essential role in assisting protein folding. The GroEL-GroES system forms a nano-cage that allows encapsulation of the non-native substrate proteins and provides a physical environment optimized to promote and accelerate protein folding. The protein is Chaperonin GroEL of Brucella melitensis biotype 1 (strain ATCC 23456 / CCUG 17765 / NCTC 10094 / 16M).